A 279-amino-acid polypeptide reads, in one-letter code: Phospholipase A and acyltransferase 5 (279 aa).

2 disordered regions span residues 1-53 (MGLS…GLNS) and 70-117 (QLPA…ENEG). Residues 97–106 (LETTPSQKAD) show a composition bias toward polar residues. Residues 135 to 249 (LIEIFRIGYE…LRYGVPRSQQ (115 aa)) form the LRAT domain. Residues H145 and H157 contribute to the active site. The active-site Acyl-thioester intermediate is the C233.

Belongs to the H-rev107 family. As to expression, highest expression level in testis and pancreas.

The protein localises to the cytoplasm. It localises to the cytosol. It carries out the reaction a 1,2-diacyl-sn-glycero-3-phosphocholine + H2O = a 1-acyl-sn-glycero-3-phosphocholine + a fatty acid + H(+). It catalyses the reaction a 1,2-diacyl-sn-glycero-3-phosphocholine + H2O = a 2-acyl-sn-glycero-3-phosphocholine + a fatty acid + H(+). The enzyme catalyses 1-hexadecanoyl-2-(5Z,8Z,11Z,14Z-eicosatetraenoyl)-sn-glycero-3-phosphocholine + 1,2-di-(9Z-octadecenoyl)-sn-glycero-3-phosphoethanolamine = N-(5Z,8Z,11Z,14Z-eicosatetraenoyl)-1,2-di-(9Z-octadecenoyl)-sn-glycero-3-phosphoethanolamine + 1-hexadecanoyl-sn-glycero-3-phosphocholine + H(+). The catalysed reaction is 1,2-di-(9Z-octadecenoyl)-sn-glycero-3-phosphoethanolamine + 1,2-dihexadecanoyl-sn-glycero-3-phosphocholine = N-hexadecanoyl-1,2-di-(9Z-octadecenoyl)-sn-glycero-3-phosphoethanolamine + 1-hexadecanoyl-sn-glycero-3-phosphocholine + H(+). It carries out the reaction 1,2-di-(9Z-octadecenoyl)-sn-glycero-3-phosphoethanolamine + 1,2-dihexadecanoyl-sn-glycero-3-phosphocholine = N-hexadecanoyl-1,2-di-(9Z-octadecenoyl)-sn-glycero-3-phosphoethanolamine + 2-hexadecanoyl-sn-glycero-3-phosphocholine + H(+). It catalyses the reaction a 1,2-diacyl-sn-glycero-3-phosphoethanolamine + a 1,2-diacyl-sn-glycero-3-phosphocholine = an N-acyl-1,2-diacyl-sn-glycero-3-phosphoethanolamine + a 1-acyl-sn-glycero-3-phosphocholine + H(+). The enzyme catalyses a 1,2-diacyl-sn-glycero-3-phosphoethanolamine + a 1,2-diacyl-sn-glycero-3-phosphocholine = an N-acyl-1,2-diacyl-sn-glycero-3-phosphoethanolamine + a 2-acyl-sn-glycero-3-phosphocholine + H(+). The catalysed reaction is 1-hexadecanoyl-2-(9Z-octadecenoyl)-sn-glycero-3-phosphocholine + 1,2-di-(9Z-octadecenoyl)-sn-glycero-3-phosphoethanolamine = N,1,2-tri-(9Z-octadecenoyl)-sn-glycero-3-phosphoethanolamine + 1-hexadecanoyl-sn-glycero-3-phosphocholine + H(+). Exhibits both phospholipase A1/2 and acyltransferase activities. Shows phospholipase A1 (PLA1) and A2 (PLA2) activity, catalyzing the calcium-independent release of fatty acids from the sn-1 or sn-2 position of glycerophospholipids. Shows N-acyltransferase activity, catalyzing the calcium-independent transfer of a fatty acyl group at the sn-1 position of phosphatidylcholine (PC) and other glycerophospholipids to the primary amine of phosphatidylethanolamine (PE), forming N-acylphosphatidylethanolamine (NAPE), which serves as precursor for N-acylethanolamines (NAEs). This is Phospholipase A and acyltransferase 5 from Homo sapiens (Human).